We begin with the raw amino-acid sequence, 206 residues long: MARGKFITFEGIDGAGKTTHLSWFRERLEQKVASTGRSVVMTREPGGTPLGEQIREIVLHQKMDLETEALLMFALRRQHLAEVIEPALARGDWVLSDRFTDATFAYQGGGRGLPRDKLETLERWVQGGFQPDLTVLFDLDPEVASERRSAARDPDRFESESEAFFSRTRAEYLRRAEEAPYRFAIIDSAQSIAQIQRRLEELIAIL.

Residue 11–18 (GIDGAGKT) participates in ATP binding.

This sequence belongs to the thymidylate kinase family.

It catalyses the reaction dTMP + ATP = dTDP + ADP. Functionally, phosphorylation of dTMP to form dTDP in both de novo and salvage pathways of dTTP synthesis. The sequence is that of Thymidylate kinase from Paraburkholderia xenovorans (strain LB400).